The following is a 239-amino-acid chain: Small ribosomal subunit protein uS2 (239 aa).

This sequence belongs to the universal ribosomal protein uS2 family.

The protein is Small ribosomal subunit protein uS2 of Histophilus somni (strain 129Pt) (Haemophilus somnus).